We begin with the raw amino-acid sequence, 200 residues long: Imidazole glycerol phosphate synthase subunit HisH (200 aa).

The region spanning 2–200 is the Glutamine amidotransferase type-1 domain; the sequence is KVAIVEYGVG…LGEVLTGASR (199 aa). Residue Cys79 is the Nucleophile of the active site. Active-site residues include His179 and Glu181.

In terms of assembly, heterodimer of HisH and HisF.

Its subcellular location is the cytoplasm. It catalyses the reaction 5-[(5-phospho-1-deoxy-D-ribulos-1-ylimino)methylamino]-1-(5-phospho-beta-D-ribosyl)imidazole-4-carboxamide + L-glutamine = D-erythro-1-(imidazol-4-yl)glycerol 3-phosphate + 5-amino-1-(5-phospho-beta-D-ribosyl)imidazole-4-carboxamide + L-glutamate + H(+). The catalysed reaction is L-glutamine + H2O = L-glutamate + NH4(+). Its pathway is amino-acid biosynthesis; L-histidine biosynthesis; L-histidine from 5-phospho-alpha-D-ribose 1-diphosphate: step 5/9. IGPS catalyzes the conversion of PRFAR and glutamine to IGP, AICAR and glutamate. The HisH subunit catalyzes the hydrolysis of glutamine to glutamate and ammonia as part of the synthesis of IGP and AICAR. The resulting ammonia molecule is channeled to the active site of HisF. This is Imidazole glycerol phosphate synthase subunit HisH from Methanopyrus kandleri (strain AV19 / DSM 6324 / JCM 9639 / NBRC 100938).